The chain runs to 185 residues: MVEAGDFRRGLTIEYDGQIFQVIEFLHVKPGKGAAFVRTKLKNIKTGAVIEKTFRPDERMPLAHIERREMQYLYNDGELYYFMDTQTYEQIALNQEMVGDALKFVKENMTVTILSHNGSVFGVEPPRFVELEVIDTEPGFKGDTQTGATKPAKVETGAVIQVPLFINVGDKIKIDTSTEEYLSRV.

This sequence belongs to the elongation factor P family.

The protein localises to the cytoplasm. It participates in protein biosynthesis; polypeptide chain elongation. Its function is as follows. Involved in peptide bond synthesis. Stimulates efficient translation and peptide-bond synthesis on native or reconstituted 70S ribosomes in vitro. Probably functions indirectly by altering the affinity of the ribosome for aminoacyl-tRNA, thus increasing their reactivity as acceptors for peptidyl transferase. The polypeptide is Elongation factor P (Caldicellulosiruptor saccharolyticus (strain ATCC 43494 / DSM 8903 / Tp8T 6331)).